A 404-amino-acid polypeptide reads, in one-letter code: Glutamyl-tRNA reductase (404 aa).

Substrate contacts are provided by residues 47 to 50, serine 94, 99 to 101, and glutamine 105; these read TCNR and EQE. Cysteine 48 acts as the Nucleophile in catalysis. 174 to 179 is a binding site for NADP(+); sequence GAGEMG.

In terms of assembly, homotetramer.

The enzyme catalyses (S)-4-amino-5-oxopentanoate + tRNA(Glu) + NADP(+) = L-glutamyl-tRNA(Glu) + NADPH + H(+). The protein operates within porphyrin-containing compound metabolism; protoporphyrin-IX biosynthesis; 5-aminolevulinate from L-glutamyl-tRNA(Glu): step 1/2. Inhibited by heavy metal compounds, Zn(2+), and heme. Also competitively inhibited by glutamycin. Its function is as follows. Catalyzes the NADPH-dependent reduction of glutamyl-tRNA(Glu) to glutamate 1-semialdehyde (GSA). In the absence of NADPH, exhibits substrate esterase activity, leading to the release of glutamate from tRNA. This is Glutamyl-tRNA reductase (hemA) from Methanopyrus kandleri (strain AV19 / DSM 6324 / JCM 9639 / NBRC 100938).